Reading from the N-terminus, the 445-residue chain is Putative ubiquitin carboxyl-terminal hydrolase L293 (445 aa).

The 309-residue stretch at 133 to 441 (KALANFGNSC…SAYIILYGDI (309 aa)) folds into the USP domain. Catalysis depends on cysteine 142, which acts as the Nucleophile. Residue histidine 384 is the Proton acceptor of the active site.

This sequence belongs to the peptidase C19 family.

The protein localises to the virion. It catalyses the reaction Thiol-dependent hydrolysis of ester, thioester, amide, peptide and isopeptide bonds formed by the C-terminal Gly of ubiquitin (a 76-residue protein attached to proteins as an intracellular targeting signal).. This is Putative ubiquitin carboxyl-terminal hydrolase L293 from Acanthamoeba polyphaga mimivirus (APMV).